We begin with the raw amino-acid sequence, 330 residues long: MAYKIPFPPRQPSASSHLPLTLISLEDWALVTLNGPDRVKYLQGQVTADIEALPADSHVLCGHCDAKGKMWSNLRLFHRGEGFAYLERRSVLDSQLAEIKKYAVFSKLTIAADSEAVLLGVAGFQARAALAGVFNSLPDAEHQVVQDGETTLLHFSLPAERFLLVTTAAVAEQLVDKLHEQAELNDSQQWLTLDIEAGYPVIDAANSGQFIPQATNLQALDGISFSKGCYTGQEMVARAKFRGANKRALYWLEGKAGRVPQAAEDVELQLGENWRRTGTVLSAARLADGTLWVQVVLNNDLDADSKLRVRDDATSQLAIKPLPYSLAEEK.

Folate contacts are provided by W28 and W190.

The protein belongs to the tRNA-modifying YgfZ family.

It localises to the cytoplasm. Functionally, folate-binding protein involved in regulating the level of ATP-DnaA and in the modification of some tRNAs. It is probably a key factor in regulatory networks that act via tRNA modification, such as initiation of chromosomal replication. The chain is tRNA-modifying protein YgfZ from Serratia proteamaculans (strain 568).